Reading from the N-terminus, the 1041-residue chain is Beta-galactosidase (1041 aa).

Substrate contacts are provided by Asn103 and Asp201. Position 201 (Asp201) interacts with Na(+). The Mg(2+) site is built by Glu415, His417, and Glu460. Residues Glu460 and 536-539 contribute to the substrate site; that span reads EYAH. Glu460 acts as the Proton donor in catalysis. The active-site Nucleophile is the Glu536. Mg(2+) is bound at residue Asn596. 2 residues coordinate Na(+): Phe600 and Asn603. Substrate-binding residues include Asn603 and Trp1016.

The protein belongs to the glycosyl hydrolase 2 family. Homotetramer. The cofactor is Mg(2+). Na(+) serves as cofactor.

It catalyses the reaction Hydrolysis of terminal non-reducing beta-D-galactose residues in beta-D-galactosides.. This chain is Beta-galactosidase, found in Alteromonas mediterranea (strain DSM 17117 / CIP 110805 / LMG 28347 / Deep ecotype).